Reading from the N-terminus, the 107-residue chain is uncharacterized protein (107 aa).

4 helical membrane passes run 9–28, 33–50, 55–72, and 77–99; these read FLVF…LIME, SYII…SLNI, LAIA…AIHV, and YRVI…YLKG.

It is found in the cell membrane. This is an uncharacterized protein from Archaeoglobus fulgidus (strain ATCC 49558 / DSM 4304 / JCM 9628 / NBRC 100126 / VC-16).